Reading from the N-terminus, the 1402-residue chain is MNQEVMNLFNPQVPAQHFDSIRISIASPEKILSWSYGEIKKPETINYRTFKPERDGLFCARIFGPIKDYECLCGKYKRMKYKGIICEKCGVEVTLSRVRRERMGHIELAAPVAHIWFLKSLPSRISTLLDMTLKDVERVLYFENYIVTEPGLTSLKQNQLLSEEEYMIAVDEFGEDQFTAMIGAEAIYEMLASMNLEKIAGDLRAELAETTSDLKQKKFMKRLKIVENFMESGNRPEWMIMKVVPVIPPDLRPLVPLDGGRFATSDLNDLYRRVINRNNRLKRLIELRAPGIIIRNEKRMLQESVDALFDNGRRGRVITGANKRPLKSLSDMLKGKQGRFRQNLLGKRVDYSGRSVIVTGPELKLHQCGLPKKMALELFKPFIYARLDAKGYSSTVKQAKKLVEKEKPEVWDILDEVIREHPVLLNRAPTLHRLGIQAFEPMLVEGKAIQLHPLVCTAFNADFDGDQMAVHVPLSLEAQLEARVLMMSTNNILHPANGHPIIVPSQDMVLGLYYLSIMNQNEPGEGMAFSDIGELHHALENKVVTLHAKIRGRFKTVDADGKPVSKIHETTPGRMLIGELLPKNVNVPFDTCNQEMTKKNISKMIDTVYRHCGQKDTVIFCDRIMQLGFSHACRAGISFGKDDMVIPDSKVKIVGDTEALVKEYEQQYNDGLITQGEKYNKVVDAWGKATEKVAEEMMARIKAVEFDPETGRQKPMNSIYMMSHSGARGSPNQMRQLGGMRGLMAKPSGEIIETPIISNFKEGLTVNEYFNSTHGARKGLADTALKTANSGYLTRRLVDVAQDCIVNSVDCGTDKGLTMTAIVDAGQIVASIGARILGRTALDDIDNPVTGENIVKAGTLIDEADVAIIEKAGIQSVRIRSALTCEVQIGVCGVCYGRDLARGTPVNMGEAVGVIAAQSIGEPGTQLTMRTFHLGGTANVVDQSFLEASYEGTIQIKNRNILRNSEGVLIAMGRNMSVTILDERGVERSSQRVAYGSKIFVDDGDKVKRGQRLAEWDPYTRPMMTEVEGTVHFEDLVDGLSVLEATDESTGITKRQVIDWRSTPRGSDLKPAIIIKDASGAVAKLSRGGEARFHLSVDAILSVEPGSKVSQGDVLARSPLESAKTKDITGGLPRVAELFEARRPKDHAIIAEIDGTIRLGRDYKNKRRVMIEPAEDGVEPVEYLIPKGKPFHLQEGDYIEKGEYILDGNPAPHDILAIKGVEALASYLVNEIQEVYRLQGVVINDKHIEVIVRQMLQKVEITDAGDSQYIVGDNVDRIEMEDMNDRLIEEGKKPAYGEPVLLGITKASLQTPSFISAASFQETTKVLTEAAIAGKTDTLQGLKENVIVGRLIPAGTGGTMTQIRRIATSRDDLILEERRKGTGAGSANQMLQDMTDQVPAAE.

Zn(2+) contacts are provided by cysteine 71, cysteine 73, cysteine 86, and cysteine 89. Positions 462, 464, and 466 each coordinate Mg(2+). The Zn(2+) site is built by cysteine 811, cysteine 885, cysteine 892, and cysteine 895. The disordered stretch occupies residues 1379–1402 (RKGTGAGSANQMLQDMTDQVPAAE). Over residues 1385–1395 (GSANQMLQDMT) the composition is skewed to polar residues.

This sequence belongs to the RNA polymerase beta' chain family. In terms of assembly, the RNAP catalytic core consists of 2 alpha, 1 beta, 1 beta' and 1 omega subunit. When a sigma factor is associated with the core the holoenzyme is formed, which can initiate transcription. It depends on Mg(2+) as a cofactor. The cofactor is Zn(2+).

It carries out the reaction RNA(n) + a ribonucleoside 5'-triphosphate = RNA(n+1) + diphosphate. Its function is as follows. DNA-dependent RNA polymerase catalyzes the transcription of DNA into RNA using the four ribonucleoside triphosphates as substrates. The polypeptide is DNA-directed RNA polymerase subunit beta' (Agrobacterium fabrum (strain C58 / ATCC 33970) (Agrobacterium tumefaciens (strain C58))).